Here is a 473-residue protein sequence, read N- to C-terminus: Flavonol 3-O-glucosyltransferase UGT89B1 (473 aa).

Residue His25 is the Proton acceptor of the active site. Residue His25 participates in an anthocyanidin binding. Asp127 acts as the Charge relay in catalysis. Positions 348, 350, 365, 368, 369, 370, and 373 each coordinate UDP-alpha-D-glucose. Ala388 lines the an anthocyanidin pocket. Positions 389 and 390 each coordinate UDP-alpha-D-glucose.

The protein belongs to the UDP-glycosyltransferase family.

The enzyme catalyses a flavonol + UDP-alpha-D-glucose = a flavonol 3-O-beta-D-glucoside + UDP + H(+). The catalysed reaction is a 7-O-hydroxy-flavonol + UDP-alpha-D-glucose = a flavonol 7-O-beta-D-glucoside + UDP + H(+). Possesses quercetin 3-O-glucosyltransferase, 7-O-glucosyltransferase and 4'-O-glucosyltransferase activities in vitro. Also active in vitro on benzoates and benzoate derivatives. This Arabidopsis thaliana (Mouse-ear cress) protein is Flavonol 3-O-glucosyltransferase UGT89B1.